We begin with the raw amino-acid sequence, 63 residues long: MAKKCDLCGKGVVVGMKLSHSHIRTKRTWEPNLQRVRALVDGKPRRIRVCTRCLRSGRVIRAV.

It belongs to the bacterial ribosomal protein bL28 family.

The chain is Large ribosomal subunit protein bL28 from Desulforudis audaxviator (strain MP104C).